Reading from the N-terminus, the 493-residue chain is Transcript termination protein A18 (493 aa).

One can recognise a Helicase ATP-binding domain in the interval 100–256 (MIELKRPLYI…NSIINIAKLS (157 aa)). 113–120 (LACGFGKT) lines the ATP pocket. A DESH box motif is present at residues 206–209 (DESH). The region spanning 309 to 456 (ILDTLVEEFK…IISLSVDKLG (148 aa)) is the Helicase C-terminal domain.

It belongs to the helicase family. Poxviruses subfamily. Interacts with G2. Might be part of a transcription complex composed at least of G2, A18, and H5.

It is found in the virion. Its function is as follows. DNA helicase which seems to act as a postreplicative transcription termination factor. Involved in ATP-dependent release of nascent RNA. Forms a stable complex with single-stranded DNA, and to a lesser extent RNA. The polypeptide is Transcript termination protein A18 (Mus musculus (Mouse)).